Reading from the N-terminus, the 125-residue chain is Phosphoribosyl-AMP cyclohydrolase (125 aa).

Aspartate 74 contributes to the Mg(2+) binding site. Cysteine 75 provides a ligand contact to Zn(2+). Mg(2+) contacts are provided by aspartate 76 and aspartate 78. Residues cysteine 92 and cysteine 99 each contribute to the Zn(2+) site.

Belongs to the PRA-CH family. Homodimer. Mg(2+) serves as cofactor. Requires Zn(2+) as cofactor.

Its subcellular location is the cytoplasm. It catalyses the reaction 1-(5-phospho-beta-D-ribosyl)-5'-AMP + H2O = 1-(5-phospho-beta-D-ribosyl)-5-[(5-phospho-beta-D-ribosylamino)methylideneamino]imidazole-4-carboxamide. It functions in the pathway amino-acid biosynthesis; L-histidine biosynthesis; L-histidine from 5-phospho-alpha-D-ribose 1-diphosphate: step 3/9. Functionally, catalyzes the hydrolysis of the adenine ring of phosphoribosyl-AMP. This chain is Phosphoribosyl-AMP cyclohydrolase, found in Desulfatibacillum aliphaticivorans.